A 312-amino-acid chain; its full sequence is Taste receptor type 2 member 135 (312 aa).

The Extracellular segment spans residues 1 to 19 (MSTGHTVLGCQTTDKTVVT). Residues 20 to 40 (LFIILVLLCLVAVVGNGFIII) traverse the membrane as a helical segment. At 41–66 (ALGMKWLLRRTLSAHNKLLISLAASR) the chain is on the cytoplasmic side. A helical transmembrane segment spans residues 67 to 87 (FCLQCVVIGKNIYVFLNPTSF). At 88–97 (PYNPVIQLLN) the chain is on the extracellular side. A helical transmembrane segment spans residues 98 to 118 (LMWDFLTAATIWLCSLLGFFY). Residues 119–140 (CVKIATLTHPVFVWLKYRLPGW) lie on the Cytoplasmic side of the membrane. A helical membrane pass occupies residues 141–161 (VPWMLLSAVGMSSLTSILCFI). Residues 162–198 (GNYMIYQNHAKSGHQPWNVTGNSLRHSLEKFYFFSIK) are Extracellular-facing. Residue Asn-179 is glycosylated (N-linked (GlcNAc...) asparagine). Residues 199-219 (IIMWTIPTVVFSIFMSLLLVS) form a helical membrane-spanning segment. At 220-244 (LVRHMKKTFLALSELRDVWAQAHFK) the chain is on the cytoplasmic side. The helical transmembrane segment at 245-265 (ALLPLLSFIVLFISCFLTLVL) threads the bilayer. The Extracellular portion of the chain corresponds to 266–277 (SSASNTPYQEFR). The chain crosses the membrane as a helical span at residues 278–298 (YWMWQVVIHLCTVIHPIVILF). Residues 299–312 (SNPVLRVVIKRGCC) are Cytoplasmic-facing.

This sequence belongs to the G-protein coupled receptor T2R family.

The protein resides in the membrane. Its function is as follows. Putative taste receptor which may play a role in the perception of bitterness. This is Taste receptor type 2 member 135 (Tas2r135) from Mus musculus (Mouse).